Reading from the N-terminus, the 119-residue chain is Large ribosomal subunit protein uL18 (119 aa).

The protein belongs to the universal ribosomal protein uL18 family. As to quaternary structure, part of the 50S ribosomal subunit; part of the 5S rRNA/L5/L18/L25 subcomplex. Contacts the 5S and 23S rRNAs.

Functionally, this is one of the proteins that bind and probably mediate the attachment of the 5S RNA into the large ribosomal subunit, where it forms part of the central protuberance. In Clostridium botulinum (strain Okra / Type B1), this protein is Large ribosomal subunit protein uL18.